The following is a 780-amino-acid chain: Vacuolar protein sorting-associated protein 51 homolog (780 aa).

Alanine 2 carries the N-acetylalanine modification. Disordered regions lie at residues 270 to 292 (STLV…PAKI) and 615 to 651 (QGTF…SNSQ). Residues 273-284 (VEDDDSSNDTES) are compositionally biased toward acidic residues. Positions 626–639 (SNGSNTTTSSRSNT) are enriched in low complexity.

This sequence belongs to the VPS51 family. Component of the Golgi-associated retrograde protein (GARP) complex, composed by VPS51, VPS52, VPS53 and VPS54. Component of the endosome-associated retrograde protein (EARP) complex, composed of VPS51, VPS52, VPS53 and VPS50. Interacts with VPS52. As to expression, expressed in primary and lateral roots, shoots of seedlings and flowers.

The protein localises to the golgi apparatus. Its subcellular location is the trans-Golgi network. It is found in the recycling endosome. It localises to the prevacuolar compartment. Functionally, acts as a component of the GARP complex that is involved in retrograde transport from early and late endosomes to the trans-Golgi network (TGN). The GARP complex is required for the maintenance of protein retrieval from endosomes to the TGN, acid hydrolase sorting, lysosome function, endosomal cholesterol traffic and autophagy. VPS51 participates in retrograde transport of acid hydrolase receptors, likely by promoting tethering and SNARE-dependent fusion of endosome-derived carriers to the TGN. Acts as a component of the EARP complex that is involved in endocytic recycling. The EARP complex associates with Rab4-positive endosomes and promotes recycling of internalized transferrin receptor (TFRC) to the plasma membrane. Required for vacuolar targeting and cellular trafficking. Involved in the regulation of vascular tissue patterning, probably by regulating PIN1 expression pattern, thus modulating auxin flux. Important to prevent PIN1 accumulation within margin cells, possibly by targeting PIN1 to the lytic vacuole. Regulates PIN1 and ATHB8 expression pattern in secondary veins. The polypeptide is Vacuolar protein sorting-associated protein 51 homolog (Arabidopsis thaliana (Mouse-ear cress)).